A 71-amino-acid chain; its full sequence is Small ribosomal subunit protein bS21 (71 aa).

Positions 38–71 are disordered; sequence YEKPTTVRKRAKAAAQKRHAKKLSRENARRVRLY. Over residues 43–59 the composition is skewed to basic residues; it reads TVRKRAKAAAQKRHAKK. Residues 60–71 show a composition bias toward basic and acidic residues; sequence LSRENARRVRLY.

Belongs to the bacterial ribosomal protein bS21 family.

The sequence is that of Small ribosomal subunit protein bS21 from Aliivibrio fischeri (strain ATCC 700601 / ES114) (Vibrio fischeri).